The following is a 287-amino-acid chain: Undecaprenyl-diphosphatase (287 aa).

The next 7 membrane-spanning stretches (helical) occupy residues 6 to 26 (LHLL…FIPV), 45 to 65 (SGKV…MWIF), 89 to 109 (NLLL…KSIK), 111 to 131 (VFYH…IMLW), 204 to 224 (ATEF…VYDL), 238 to 258 (AIAV…RAVL), and 266 to 286 (YRVF…WIYA).

The protein belongs to the UppP family.

The protein localises to the cell inner membrane. It carries out the reaction di-trans,octa-cis-undecaprenyl diphosphate + H2O = di-trans,octa-cis-undecaprenyl phosphate + phosphate + H(+). Its function is as follows. Catalyzes the dephosphorylation of undecaprenyl diphosphate (UPP). Confers resistance to bacitracin. The chain is Undecaprenyl-diphosphatase from Bordetella pertussis (strain Tohama I / ATCC BAA-589 / NCTC 13251).